A 482-amino-acid chain; its full sequence is Tektin (482 aa).

5 coiled-coil regions span residues 100-129 (CLAE…QAKI), 171-204 (ARAV…ALRV), 282-324 (RLNE…ALTS), 376-407 (VKVA…DALR), and 441-478 (RTQT…TMGG). The interval 311–330 (EQARAKGQRSALTSALDDKR) is disordered. Arg462 bears the Asymmetric dimethylarginine mark.

This sequence belongs to the tektin family. Post-translationally, asymmetrically dimethylated at Arg-462 during flagellum resorption. Probably methylated by PRMT1.

The protein resides in the cytoplasm. Its subcellular location is the cytoskeleton. It localises to the flagellum axoneme. The protein localises to the flagellum basal body. Structural component of ciliary and flagellar microtubules. Plays a key role in the assembly or attachment of the inner dynein arm to microtubules in flagella and cilia. Forms filamentous polymers in the walls of ciliary and flagellar microtubules. This chain is Tektin, found in Chlamydomonas reinhardtii (Chlamydomonas smithii).